We begin with the raw amino-acid sequence, 483 residues long: MDLYGYVSCTPRIRHDVLDGLLNVYDPDELCSRDTPFRLYLTRYDCTPEGLRLFLTRGADVNGVRGSRTSPLCTVLSNKDLGNEAEALAKQLIDAGADVNAMAPDGRYPLLCLLENDRINTARFVRYMIDRGTSVYVRGTDGYGPVQTYIHSKNVVLDTLRELVRAGATVHDPDKTYGFNVLQCYMIAHVRSSNVQILRFLLRHGVDSSRGLHATVMFNTLERKISHGVFNRKVLDFIFTQISINEQNSLDFTPINYCVIHNDRRTFDYLLERGADPNVVNFLGNSCLDLAVLNGNKYMVHRLLRKTITPDAYTRALNVVNSNIYSIKSYGMSEFVKRHGTLYKALIRSFVKDSDREIFTYVHIYDYFREFVDECIRERDAMKADVLDAVSVFDTAFGLVARPRWKHVRILSKYVRGVYGDRVKKILRSLHKRRFKTDRLVRRIADLCGPDGLWTRLPVEVRYSVVDYLTDDEIHDLFVKIHA.

6 ANK repeats span residues 32–63, 67–101, 105–137, 177–210, 250–279, and 283–312; these read SRDTPFRLYLTRYDCTPEGLRLFLTRGADVNG, SRTSPLCTVLSNKDLGNEAEALAKQLIDAGADVNA, DGRYPLLCLLENDRINTARFVRYMIDRGTSVYV, YGFNVLQCYMIAHVRSSNVQILRFLLRHGVDSSR, LDFTPINYCVIHNDRRTFDYLLERGADPNV, and LGNSCLDLAVLNGNKYMVHRLLRKTITPDA. The PRANC/F-box-like stretch occupies residues 390–478; that stretch reads VSVFDTAFGL…LTDDEIHDLF (89 aa).

Interacts (via PRANC/F-box-like domain) with the SKP1 component of the host SCF ubiquitin ligase complex. Interacts (via N-terminus) with host AKT1.

Its function is as follows. Substrate-specific adapter of SKP1-containing E3 ubiquitin-protein ligases which mediate the ubiquitination and subsequent proteasomal degradation of host target proteins including CDKN1B. Disappearance of host CDKN1B correlates with cell cycle progression through the G0/G1 checkpoint. Therefore, viruses in infected cells are protected from diverse innate host antiviral responses normally triggered by G0/G1 cell cycle arrest. The polypeptide is Ankyrin repeat domain-containing protein M-T5 (m005R) (Myxoma virus (strain Lausanne) (MYXV)).